The chain runs to 338 residues: 1-aminocyclopropane-1-carboxylate deaminase (338 aa).

An N6-(pyridoxal phosphate)lysine modification is found at lysine 51. Serine 78 functions as the Nucleophile in the catalytic mechanism.

Belongs to the ACC deaminase/D-cysteine desulfhydrase family. As to quaternary structure, homotrimer. Requires pyridoxal 5'-phosphate as cofactor.

It carries out the reaction 1-aminocyclopropane-1-carboxylate + H2O = 2-oxobutanoate + NH4(+). Functionally, catalyzes a cyclopropane ring-opening reaction, the irreversible conversion of 1-aminocyclopropane-1-carboxylate (ACC) to ammonia and alpha-ketobutyrate. Allows growth on ACC as a nitrogen source. The chain is 1-aminocyclopropane-1-carboxylate deaminase from Ralstonia nicotianae (strain ATCC BAA-1114 / GMI1000) (Ralstonia solanacearum).